A 354-amino-acid chain; its full sequence is NADH-quinone oxidoreductase subunit H (354 aa).

Transmembrane regions (helical) follow at residues 25–45 (LVRI…LILW), 91–111 (WLYL…WAVI), 126–146 (LLYA…AGWA), 170–190 (MGFA…SEIV), 205–225 (FLSW…ISGI), 253–273 (MAFA…SALA), 290–310 (FIPG…VFIW), and 330–350 (VFLP…MSPL).

Belongs to the complex I subunit 1 family. As to quaternary structure, NDH-1 is composed of 14 different subunits. Subunits NuoA, H, J, K, L, M, N constitute the membrane sector of the complex.

Its subcellular location is the cell inner membrane. It catalyses the reaction a quinone + NADH + 5 H(+)(in) = a quinol + NAD(+) + 4 H(+)(out). Its function is as follows. NDH-1 shuttles electrons from NADH, via FMN and iron-sulfur (Fe-S) centers, to quinones in the respiratory chain. The immediate electron acceptor for the enzyme in this species is believed to be ubiquinone. Couples the redox reaction to proton translocation (for every two electrons transferred, four hydrogen ions are translocated across the cytoplasmic membrane), and thus conserves the redox energy in a proton gradient. This subunit may bind ubiquinone. This chain is NADH-quinone oxidoreductase subunit H, found in Burkholderia mallei (strain ATCC 23344).